The following is a 66-amino-acid chain: Beta-toxin Cll1m (66 aa).

The region spanning 1-66 (KEGYIVNLST…VWPLPKKTCT (66 aa)) is the LCN-type CS-alpha/beta domain. Intrachain disulfides connect Cys12–Cys65, Cys16–Cys41, Cys25–Cys46, and Cys29–Cys48. Thr66 is subject to Threonine amide.

The protein belongs to the long (4 C-C) scorpion toxin superfamily. Sodium channel inhibitor family. Beta subfamily. In terms of tissue distribution, expressed by the venom gland.

The protein localises to the secreted. Functionally, beta toxins bind voltage-independently at site-4 of sodium channels (Nav) and shift the voltage of activation toward more negative potentials thereby affecting sodium channel activation and promoting spontaneous and repetitive firing. In Centruroides limpidus (Mexican scorpion), this protein is Beta-toxin Cll1m.